The sequence spans 208 residues: Large ribosomal subunit protein uL4 (208 aa).

Residues 45–77 form a disordered region; that stretch reads RQGTHKAKERAEIKGSTRKIKKQKGTGTARAGS.

It belongs to the universal ribosomal protein uL4 family. In terms of assembly, part of the 50S ribosomal subunit.

In terms of biological role, one of the primary rRNA binding proteins, this protein initially binds near the 5'-end of the 23S rRNA. It is important during the early stages of 50S assembly. It makes multiple contacts with different domains of the 23S rRNA in the assembled 50S subunit and ribosome. Functionally, forms part of the polypeptide exit tunnel. This is Large ribosomal subunit protein uL4 from Christiangramia forsetii (strain DSM 17595 / CGMCC 1.15422 / KT0803) (Gramella forsetii).